The following is a 364-amino-acid chain: NF-kappa-B inhibitor epsilon (364 aa).

Positions M1–L108 are disordered. S18 bears the Phosphoserine mark. Residues P36–P48 are compositionally biased toward low complexity. The segment covering H51 to D70 has biased composition (basic and acidic residues). Positions P93–P104 are enriched in pro residues. ANK repeat units follow at residues D122–N155, L157–L186, H190–R219, Q233–V262, S267–A296, and N300–L329.

It belongs to the NF-kappa-B inhibitor family. As to quaternary structure, interacts with RELA, REL, NFKB1 nuclear factor NF-kappa-B p50 subunit and NFKB2 nuclear factor NF-kappa-B p52 subunit. Interacts with HNRNPA2B1; the interaction may be mediated by the RRM2 domain of HNRNPA2B1, and HNRNPA2B1 may interact simultaneously with FAM76B and either NFKBIA or NFKBIE to form a complex. Post-translationally, serine phosphorylated; followed by proteasome-dependent degradation.

Its subcellular location is the cytoplasm. Sequesters NF-kappa-B transcription factor complexes in the cytoplasm, thereby inhibiting their activity. Sequestered complexes include NFKB1/p50-RELA/p65 and NFKB1/p50-REL/c-Rel complexes. Limits B-cell activation in response to pathogens, and also plays an important role in B-cell development. The polypeptide is NF-kappa-B inhibitor epsilon (Nfkbie) (Mus musculus (Mouse)).